The chain runs to 337 residues: Palmitoyltransferase ZDHHC15 (337 aa).

At 1–20 the chain is on the cytoplasmic side; it reads MRRGWKMALSGGLRCCRRVL. The chain crosses the membrane as a helical span at residues 21–41; that stretch reads SWVPVLVIVLVVLWSYYAYVF. Residues 42–56 are Lumenal-facing; that stretch reads ELCLVTVLSPAEKVI. The helical transmembrane segment at 57–77 threads the bilayer; the sequence is YLILYHAIFVFFAWTYWKSIF. Over 78–172 the chain is Cytoplasmic; that stretch reads TLPQQPNQKF…NNCIGFSNYK (95 aa). The region spanning 129 to 179 is the DHHC domain; the sequence is RFCDRCHLIKPDRCHHCSVCAMCVLKMDHHCPWVNNCIGFSNYKFFLQFLA. Residues C131, C134, H144, C145, C148, C151, and H158 each contribute to the Zn(2+) site. C159 serves as the catalytic S-palmitoyl cysteine intermediate. C165 contributes to the Zn(2+) binding site. Residues 173 to 193 traverse the membrane as a helical segment; sequence FFLQFLAYSVLYCLYIATTVF. Over 194–210 the chain is Lumenal; the sequence is SYFIKYWRGELPSVRSK. Residues 211–234 form a helical membrane-spanning segment; it reads FHVLFLLFVACMFFVSLVILFGYH. Topologically, residues 235–337 are cytoplasmic; sequence CWLVSRNKTT…LSSLAVESET (103 aa). The segment at 293-337 is disordered; it reads HSFPMRSMNESQNPLLANEEPWEDNEDESQDYPEGLSSLAVESET. Residues 312–323 are compositionally biased toward acidic residues; the sequence is EPWEDNEDESQD.

Belongs to the DHHC palmitoyltransferase family. Post-translationally, autopalmitoylated (in vitro). As to expression, in brain, expressed in both excitatory and inhibitory neurons but not expressed by glial cells.

It localises to the golgi apparatus membrane. The protein resides in the postsynaptic density. The enzyme catalyses L-cysteinyl-[protein] + hexadecanoyl-CoA = S-hexadecanoyl-L-cysteinyl-[protein] + CoA. It catalyses the reaction L-cysteinyl-[protein] + tetradecanoyl-CoA = S-tetradecanoyl-L-cysteinyl-[protein] + CoA. It carries out the reaction L-cysteinyl-[protein] + octadecanoyl-CoA = S-octadecanoyl-L-cysteinyl-[protein] + CoA. Palmitoyltransferase that catalyzes the addition of palmitate onto various protein substrates. Has no stringent fatty acid selectivity and in addition to palmitate can also transfer onto target proteins myristate from tetradecanoyl-CoA and stearate from octadecanoyl-CoA. Palmitoylates IGF2R and SORT1, promoting their partitioning to an endosomal membrane subdomain where they can interact with the retromer cargo-selective complex. Thereby, regulates retrograde transport from endosomes to the Golgi apparatus of these lysosomal sorting receptors and plays a role in trafficking of lysosomal proteins. In the nervous system, catalyzes the palmitoylation of DLG4/PSD95 and regulates its synaptic clustering and function in synaptogenesis. Could be involved in the differentiation of dopaminergic neurons and the development of the diencephalon. Could also catalyze the palmitoylation of GAP43. Could also palmitoylate DNAJC5 and regulate its localization to the Golgi membrane. Could also palmitoylate FYN as shown in vitro. May palmitoylate CALHM3 subunit of gustatory voltage-gated ion channels and modulate channel gating and kinetics. The protein is Palmitoyltransferase ZDHHC15 of Rattus norvegicus (Rat).